The sequence spans 500 residues: L-arabinose isomerase (500 aa).

The Mn(2+) site is built by glutamate 306, glutamate 333, histidine 349, and histidine 448.

It belongs to the arabinose isomerase family. Mn(2+) serves as cofactor.

The catalysed reaction is beta-L-arabinopyranose = L-ribulose. It functions in the pathway carbohydrate degradation; L-arabinose degradation via L-ribulose; D-xylulose 5-phosphate from L-arabinose (bacterial route): step 1/3. Its function is as follows. Catalyzes the conversion of L-arabinose to L-ribulose. The chain is L-arabinose isomerase from Koribacter versatilis (strain Ellin345).